The following is a 78-amino-acid chain: Exodeoxyribonuclease 7 small subunit (78 aa).

It belongs to the XseB family. Heterooligomer composed of large and small subunits.

It is found in the cytoplasm. It catalyses the reaction Exonucleolytic cleavage in either 5'- to 3'- or 3'- to 5'-direction to yield nucleoside 5'-phosphates.. Bidirectionally degrades single-stranded DNA into large acid-insoluble oligonucleotides, which are then degraded further into small acid-soluble oligonucleotides. The chain is Exodeoxyribonuclease 7 small subunit from Nocardia farcinica (strain IFM 10152).